Here is a 110-residue protein sequence, read N- to C-terminus: Phosphoribosyl-ATP pyrophosphatase (110 aa).

It belongs to the PRA-PH family.

It localises to the cytoplasm. The catalysed reaction is 1-(5-phospho-beta-D-ribosyl)-ATP + H2O = 1-(5-phospho-beta-D-ribosyl)-5'-AMP + diphosphate + H(+). Its pathway is amino-acid biosynthesis; L-histidine biosynthesis; L-histidine from 5-phospho-alpha-D-ribose 1-diphosphate: step 2/9. The polypeptide is Phosphoribosyl-ATP pyrophosphatase (Clostridium botulinum (strain ATCC 19397 / Type A)).